The chain runs to 261 residues: Thiamine thiazole synthase (261 aa).

NAD(+)-binding positions include serine 40, 59 to 60, glycine 67, valine 133, and 159 to 161; these read ER and HVD. Positions 161 and 176 each coordinate Fe cation. 2 residues coordinate NAD(+): serine 179 and methionine 226. Arginine 236 serves as a coordination point for glycine.

Belongs to the THI4 family. In terms of assembly, homooctamer; tetramer of dimers. Fe(2+) is required as a cofactor.

The catalysed reaction is hydrogen sulfide + glycine + NAD(+) = ADP-5-ethyl-4-methylthiazole-2-carboxylate + nicotinamide + 3 H2O + H(+). The protein operates within cofactor biosynthesis; thiamine diphosphate biosynthesis. In terms of biological role, involved in the biosynthesis of the thiazole moiety of thiamine. Catalyzes the conversion of NAD and glycine to adenosine diphosphate 5-(2-hydroxyethyl)-4-methylthiazole-2-carboxylate (ADT), an adenylated thiazole intermediate, using free sulfide as a source of sulfur. This chain is Thiamine thiazole synthase, found in Methanococcus vannielii (strain ATCC 35089 / DSM 1224 / JCM 13029 / OCM 148 / SB).